A 299-amino-acid chain; its full sequence is tRNA dimethylallyltransferase (299 aa).

13-20 lines the ATP pocket; that stretch reads GPTASGKT. Substrate is bound at residue 15-20; the sequence is TASGKT. Residues 38–41 are interaction with substrate tRNA; it reads DSRQ.

It belongs to the IPP transferase family. Monomer. Mg(2+) serves as cofactor.

It carries out the reaction adenosine(37) in tRNA + dimethylallyl diphosphate = N(6)-dimethylallyladenosine(37) in tRNA + diphosphate. In terms of biological role, catalyzes the transfer of a dimethylallyl group onto the adenine at position 37 in tRNAs that read codons beginning with uridine, leading to the formation of N6-(dimethylallyl)adenosine (i(6)A). The polypeptide is tRNA dimethylallyltransferase (Parasynechococcus marenigrum (strain WH8102)).